A 266-amino-acid polypeptide reads, in one-letter code: Proteasome subunit alpha type-1 (266 aa).

Positions 235 to 266 (DGFKTRPEDIPAVADNEEDDDELHEQPPDVEE) are disordered. Residues 249–266 (DNEEDDDELHEQPPDVEE) are compositionally biased toward acidic residues.

The protein belongs to the peptidase T1A family. In terms of assembly, the 26S proteasome consists of a 20S proteasome core and two 19S regulatory subunits. The 20S proteasome core is composed of 28 subunits that are arranged in four stacked rings, resulting in a barrel-shaped structure. The two end rings are each formed by seven alpha subunits, and the two central rings are each formed by seven beta subunits. The catalytic chamber with the active sites is on the inside of the barrel.

The protein localises to the cytoplasm. Its subcellular location is the nucleus. Its function is as follows. The proteasome is a multicatalytic proteinase complex which is characterized by its ability to cleave peptides with Arg, Phe, Tyr, Leu, and Glu adjacent to the leaving group at neutral or slightly basic pH. The proteasome has an ATP-dependent proteolytic activity. The chain is Proteasome subunit alpha type-1 from Trypanosoma brucei rhodesiense.